The following is a 245-amino-acid chain: Phycoerythrobilin:ferredoxin oxidoreductase (245 aa).

It belongs to the HY2 family.

It catalyses the reaction (3Z)-phycoerythrobilin + oxidized 2[4Fe-4S]-[ferredoxin] = 15,16-dihydrobiliverdin + reduced 2[4Fe-4S]-[ferredoxin] + 2 H(+). Functionally, catalyzes the two-electron reduction of the C2 and C3(1) diene system of 15,16-dihydrobiliverdin. This is Phycoerythrobilin:ferredoxin oxidoreductase (pebB) from Gloeobacter violaceus (strain ATCC 29082 / PCC 7421).